The following is a 92-amino-acid chain: UPF0250 protein Rmag_0541 (92 aa).

This sequence belongs to the UPF0250 family.

The chain is UPF0250 protein Rmag_0541 from Ruthia magnifica subsp. Calyptogena magnifica.